Consider the following 139-residue polypeptide: Probable transcription termination protein NusA (139 aa).

Residues D31–T97 form the KH domain.

It belongs to the NusA family.

The protein localises to the cytoplasm. Its function is as follows. Participates in transcription termination. This chain is Probable transcription termination protein NusA, found in Halobacterium salinarum (strain ATCC 29341 / DSM 671 / R1).